A 148-amino-acid polypeptide reads, in one-letter code: Deoxyuridine 5'-triphosphate nucleotidohydrolase (148 aa).

Substrate contacts are provided by residues 67 to 69, Asn-80, 84 to 86, and Met-94; these read RSG and LID.

Belongs to the dUTPase family. Requires Mg(2+) as cofactor.

It catalyses the reaction dUTP + H2O = dUMP + diphosphate + H(+). The protein operates within pyrimidine metabolism; dUMP biosynthesis; dUMP from dCTP (dUTP route): step 2/2. This enzyme is involved in nucleotide metabolism: it produces dUMP, the immediate precursor of thymidine nucleotides and it decreases the intracellular concentration of dUTP so that uracil cannot be incorporated into DNA. This Burkholderia lata (strain ATCC 17760 / DSM 23089 / LMG 22485 / NCIMB 9086 / R18194 / 383) protein is Deoxyuridine 5'-triphosphate nucleotidohydrolase.